We begin with the raw amino-acid sequence, 99 residues long: MVDSVFPAPSLVDETFLAPSSSETNDTAMAADGTLAKMNMFQFNSMLKEYSPPRFEDLFQDLDASKAGWEHYRPRLVSEVDLIDAEHYSLFSANTVSPL.

The protein operates within secondary metabolite biosynthesis. Its function is as follows. Part of the gene cluster that mediates the biosynthesis of imizoquins A to D, tripeptide-derived alkaloids that serve a protective role against oxidative stress that are essential for normal germination. ImqB is a canonical three-module NRPS that assembles the tripeptide backbone of the imizoquins via condensation of Trp, Tyr, and Leu-derived precursors. N-methylation by imqF and phenol oxidation by imqC, followed by cyclization via the FAD-dependent oxidase imqH carry out the three-step transformation of L-tyrosine into tetrahydroisoquinoline. Importantly, this sequence requires the presence of a free amine in the tyrosine moiety, indicating that isoquinoline formation occurs prior to peptide bond formation. The imidazolidin-4-one ring of imizoquins could form following additional oxidation of the methyl-derived bridgehead carbon by imqH. Lastly, O-methylation by imqG and leucine hydroxylation by imqE complete biosynthesis of the imizoquins. This chain is Imizoquin biosynthesis cluster protein A, found in Aspergillus flavus (strain ATCC 200026 / FGSC A1120 / IAM 13836 / NRRL 3357 / JCM 12722 / SRRC 167).